Here is a 127-residue protein sequence, read N- to C-terminus: Small ribosomal subunit protein uS11 (127 aa).

The protein belongs to the universal ribosomal protein uS11 family. As to quaternary structure, part of the 30S ribosomal subunit. Interacts with proteins S7 and S18. Binds to IF-3.

Located on the platform of the 30S subunit, it bridges several disparate RNA helices of the 16S rRNA. Forms part of the Shine-Dalgarno cleft in the 70S ribosome. This chain is Small ribosomal subunit protein uS11, found in Rickettsia prowazekii (strain Madrid E).